A 277-amino-acid chain; its full sequence is Phosphoenolpyruvate synthase regulatory protein (277 aa).

Position 157-164 (157-164) interacts with ADP; that stretch reads GVSRCGKT.

Belongs to the pyruvate, phosphate/water dikinase regulatory protein family. PSRP subfamily.

The catalysed reaction is [pyruvate, water dikinase] + ADP = [pyruvate, water dikinase]-phosphate + AMP + H(+). It carries out the reaction [pyruvate, water dikinase]-phosphate + phosphate + H(+) = [pyruvate, water dikinase] + diphosphate. Bifunctional serine/threonine kinase and phosphorylase involved in the regulation of the phosphoenolpyruvate synthase (PEPS) by catalyzing its phosphorylation/dephosphorylation. The protein is Phosphoenolpyruvate synthase regulatory protein of Escherichia coli O1:K1 / APEC.